A 451-amino-acid polypeptide reads, in one-letter code: Phenolic glucoside malonyltransferase 2 (451 aa).

The Proton acceptor role is filled by His-165. The short motif at 165 to 169 (HAVLD) is the HXXXD motif element. Malonyl-CoA is bound by residues His-270 and 272-273 (ST). The active-site Proton acceptor is the Asp-395. Residues 395 to 399 (DFGWG) carry the DFGWG motif motif.

Belongs to the plant acyltransferase family. Phenolic glucoside malonyltransferase subfamily.

The enzyme catalyses a flavonol 7-O-beta-D-glucoside + malonyl-CoA = a flavonol 7-O-(6-O-malonyl-beta-D-glucoside) + CoA. Its function is as follows. Malonyltransferase acting on xenobiotic glucosides. Has activity toward 2-Naphthol glucoside (2NAG), 1-Naphthol glucoside (1NAG), kaempferol 7-O-glucoside, hydroxycoumarin glucosides and phenol-glucosides, but not toward kaempferol 3-O-glucoside or daidzin. Prefers phenol glucosides rather than naphtol glucosides. In vivo, seems to be involved in the malonylation of 4-methylumbelliferone glucoside or 4-nitrophenyl glucoside while PMAT1 would be involved in the malonylation of 2-Naphthol glucoside. The sequence is that of Phenolic glucoside malonyltransferase 2 (PMAT2) from Arabidopsis thaliana (Mouse-ear cress).